The following is a 338-amino-acid chain: Lipoate-protein ligase A (338 aa).

One can recognise a BPL/LPL catalytic domain in the interval 29 to 216 (SPDQRVLFLW…AFFNYYDEKV (188 aa)). ATP contacts are provided by residues arginine 71, 76–79 (GAVF), and lysine 134. Position 134 (lysine 134) interacts with (R)-lipoate.

It belongs to the LplA family. Monomer.

It localises to the cytoplasm. It carries out the reaction L-lysyl-[lipoyl-carrier protein] + (R)-lipoate + ATP = N(6)-[(R)-lipoyl]-L-lysyl-[lipoyl-carrier protein] + AMP + diphosphate + H(+). It functions in the pathway protein modification; protein lipoylation via exogenous pathway; protein N(6)-(lipoyl)lysine from lipoate: step 1/2. The protein operates within protein modification; protein lipoylation via exogenous pathway; protein N(6)-(lipoyl)lysine from lipoate: step 2/2. Functionally, catalyzes both the ATP-dependent activation of exogenously supplied lipoate to lipoyl-AMP and the transfer of the activated lipoyl onto the lipoyl domains of lipoate-dependent enzymes. This chain is Lipoate-protein ligase A, found in Yersinia enterocolitica serotype O:8 / biotype 1B (strain NCTC 13174 / 8081).